A 201-amino-acid chain; its full sequence is uncharacterized protein (201 aa).

A signal peptide spans 1–25 (MYRAGVTLLVVAVVSLGRWDVVTMA). The Extracellular segment spans residues 26–170 (AAIGIGWYEP…AYFRRSNHRA (145 aa)). N-linked (GlcNAc...) asparagine; by host glycans are attached at residues asparagine 46, asparagine 49, asparagine 55, asparagine 84, asparagine 95, asparagine 113, asparagine 122, asparagine 137, and asparagine 144. A helical membrane pass occupies residues 171-191 (FMIVILTQVVFVVFIINASFI). Residues 192–201 (WSWTFRRHKR) are Cytoplasmic-facing.

Belongs to the HHV-5 UL120 protein family.

The protein localises to the host membrane. This is an uncharacterized protein from Homo sapiens (Human).